Consider the following 288-residue polypeptide: Programmed cell death protein 1 (288 aa).

A signal peptide spans 1-24; sequence MWVRQVPWSFTWAVLQLSWQSGWL. At 25–169 the chain is on the extracellular side; it reads LEVPNGPWRS…PKPEGRFQGM (145 aa). An Ig-like V-type domain is found at 31-139; that stretch reads PWRSLTFYPA…PKAKIEESPG (109 aa). N49, N58, N74, and N116 each carry an N-linked (GlcNAc...) asparagine glycan. C54 and C123 are oxidised to a cystine. Residues 70-77 are interaction with CD274/PDCD1L1; sequence LSPSNQTE. Residues 170–190 traverse the membrane as a helical segment; sequence VIGIMSALVGIPVLLLLAWAL. Over 191–288 the chain is Cytoplasmic; the sequence is AVFCSTSMSE…HEDGHCSWPL (98 aa). Positions 223-228 match the ITIM motif motif; the sequence is VAYEEL. Y225 carries the post-translational modification Phosphotyrosine. K235 is covalently cross-linked (Glycyl lysine isopeptide (Lys-Gly) (interchain with G-Cter in ubiquitin)). T236 carries the post-translational modification Phosphothreonine; by MAPK3. The ITSM motif signature appears at 247 to 251; that stretch reads EYATI. Y248 is subject to Phosphotyrosine. The tract at residues 263 to 288 is disordered; it reads GRRGSADGLQGPRPPRHEDGHCSWPL. The segment covering 277-288 has biased composition (basic and acidic residues); that stretch reads PRHEDGHCSWPL.

As to quaternary structure, monomer. Interacts with CD274/PDCD1L1. Interacts with CD273/PDCD1LG2. Interacts with FBXO38; leading to ubiquitination and degradation by the proteasome. Post-translationally, ubiquitinated at Lys-235 by the SCF(FBXO38) complex, leading to its proteasomal degradation. Ubiquitinated via 'Lys-48'-linked polyubiquitin chains. Deubiquitinated and thus stabilized by USP5. Tyrosine phosphorylated at Tyr-225 (within ITIM motif) and Tyr-248 (ITSM motif) upon ligand binding. Phosphorylation at Tyr-248 promotes the recruitment of the protein tyrosine phosphatase PTPN11/SHP-2 that mediates dephosphorylation of key TCR proximal signaling molecules, such as ZAP70, PRKCQ/PKCtheta and CD247/CD3zeta. Phosphorylation at Thr-236 promotes the recruitment of the deubiquitinase USP5. As to expression, thymus-specific.

The protein resides in the cell membrane. Its function is as follows. Inhibitory receptor on antigen activated T-cells that plays a critical role in induction and maintenance of immune tolerance to self. Delivers inhibitory signals upon binding to ligands, such as CD274/PDCD1L1 and CD273/PDCD1LG2. Following T-cell receptor (TCR) engagement, PDCD1 associates with CD3-TCR in the immunological synapse and directly inhibits T-cell activation. Suppresses T-cell activation through the recruitment of PTPN11/SHP-2: following ligand-binding, PDCD1 is phosphorylated within the ITSM motif, leading to the recruitment of the protein tyrosine phosphatase PTPN11/SHP-2 that mediates dephosphorylation of key TCR proximal signaling molecules, such as ZAP70, PRKCQ/PKCtheta and CD247/CD3zeta. The PDCD1-mediated inhibitory pathway is exploited by tumors to attenuate anti-tumor immunity and facilitate tumor survival. The chain is Programmed cell death protein 1 from Mus musculus (Mouse).